We begin with the raw amino-acid sequence, 246 residues long: Major pollen allergen Cyn d 1 (246 aa).

Asparagine 9 carries N-linked (GlcNAc...) asparagine glycosylation. In terms of domain architecture, Expansin-like EG45 spans 39 to 145 (GGACGYKDVD…RRVKCKYPSG (107 aa)). The region spanning 159-240 (HYLALLVKYA…NWKPDTVYTS (82 aa)) is the Expansin-like CBD domain.

It belongs to the expansin family. Expansin B subfamily.

The protein localises to the secreted. The sequence is that of Major pollen allergen Cyn d 1 (CYND1) from Cynodon dactylon (Bermuda grass).